Here is a 44-residue protein sequence, read N- to C-terminus: Pandinin-1 (44 aa).

In terms of tissue distribution, expressed by the venom gland.

The protein localises to the secreted. The protein resides in the target cell membrane. In terms of biological role, disrupts cell membranes through formation of pores. Strong antimicrobial activity against Gram-positive bacteria B.subtilis, S.epidermidis, E.faecalis and S.aureus. Less active against Gram-negative bacteria P.aeruginosa and E.coli. Has no antifungal or hemolytic activity. The protein is Pandinin-1 of Pandinus imperator (Emperor scorpion).